The chain runs to 776 residues: Microtubule-associated protein tau (776 aa).

The segment covering 1-26 (MAEPRQEFEVMEDHAGTYGLGDRKDQ) has biased composition (basic and acidic residues). The interval 1-591 (MAEPRQEFEV…PVPMPDLKNV (591 aa)) is disordered. An N-acetylalanine modification is found at Ala2. Residues Tyr18 and Tyr29 each carry the phosphotyrosine modification. Lys44 participates in a covalent cross-link: Glycyl lysine isopeptide (Lys-Gly) (interchain with G-Cter in ubiquitin). Phosphoserine is present on residues Ser46 and Ser61. Residues 61-71 (SETSDAKSTPT) show a composition bias toward polar residues. A phosphothreonine mark is found at Thr69, Thr71, and Thr111. 2 stretches are compositionally biased toward basic and acidic residues: residues 179–189 (EGGRHAPELLK) and 207–216 (GGKERPGSKE). Position 214 is a phosphoserine (Ser214). Over residues 217 to 228 (EVDEDRDVDESS) the composition is skewed to acidic residues. Composition is skewed to basic and acidic residues over residues 293–303 (KGQDAHLEFTF) and 314–323 (EQAHSEEHLG). Positions 324–340 (RAAFPGAPGEGPEARGP) are enriched in low complexity. 2 stretches are compositionally biased toward basic and acidic residues: residues 344–356 (EDTK…EPSE) and 381–393 (KSKD…DKKA). The span at 440–452 (KYVSSVTPRTGSS) shows a compositional bias: polar residues. Residues 455 to 466 (KEMKLKGADGKT) are compositionally biased toward basic and acidic residues. Thr470 carries the phosphothreonine modification. At Arg472 the chain carries Omega-N-methylarginine. The residue at position 480 (Lys480) is an N6,N6-dimethyllysine; alternate. At Lys480 the chain carries N6-acetyllysine; alternate. Phosphothreonine is present on residues Thr486, Thr492, and Thr498. Residues Ser502, Ser526, and Ser530 each carry the phosphoserine modification. Residues 517–528 (RSERGEPPKSGD) show a composition bias toward basic and acidic residues. The span at 529–549 (RSGYSSPGSPGTPGSRSRTPS) shows a compositional bias: low complexity. Position 532 is a phosphotyrosine (Tyr532). 3 positions are modified to phosphoserine: Ser533, Ser534, and Ser537. Phosphothreonine is present on residues Thr540 and Thr547. The residue at position 549 (Ser549) is a Phosphoserine. Position 552 is a phosphothreonine (Thr552). N6-acetyllysine is present on Lys560. Thr566 is subject to Phosphothreonine. Residues Ser570 and Ser572 each carry the phosphoserine modification. Tau/MAP repeat units lie at residues 579–609 (QTAP…GGGK), 610–640 (VQII…GGGS), 641–671 (VQIV…GGGQ), and 672–703 (VEVK…GGGN). Residue Lys589 forms a Glycyl lysine isopeptide (Lys-Gly) (interchain with G-Cter in ubiquitin) linkage. Lys594 bears the N6-acetyllysine; alternate mark. Lys594 carries the N6-methyllysine; alternate modification. A Glycyl lysine isopeptide (Lys-Gly) (interchain with G-Cter in ubiquitin); alternate cross-link involves residue Lys594. Residue Ser597 is modified to Phosphoserine. Lys602 participates in a covalent cross-link: Glycyl lysine isopeptide (Lys-Gly) (interchain with G-Cter in ubiquitin). Lys616 is subject to N6-acetyllysine; alternate. Residue Lys616 forms a Glycyl lysine isopeptide (Lys-Gly) (interchain with G-Cter in ubiquitin); alternate linkage. Ser620 and Ser624 each carry phosphoserine. An N6-acetyllysine modification is found at Lys625. Ser628 is modified (phosphoserine). At Lys633 the chain carries N6-acetyllysine; alternate. Lys633 participates in a covalent cross-link: Glycyl lysine isopeptide (Lys-Gly) (interchain with G-Cter in ubiquitin); alternate. Ser640 carries the phosphoserine modification. An N6,N6-dimethyllysine; alternate modification is found at Lys646. Residues Lys646, Lys652, and Lys656 each carry the N6-acetyllysine; alternate modification. Residues Lys646, Lys652, and Lys656 each participate in a glycyl lysine isopeptide (Lys-Gly) (interchain with G-Cter in ubiquitin); alternate cross-link. Ser659 carries the phosphoserine modification. An N6-acetyllysine; alternate mark is found at Lys666, Lys678, and Lys682. Residues Lys666, Lys678, and Lys682 each participate in a glycyl lysine isopeptide (Lys-Gly) (interchain with G-Cter in ubiquitin); alternate cross-link. Residue Arg684 is modified to Omega-N-methylarginine. Position 687 is a phosphoserine (Ser687). A Glycyl lysine isopeptide (Lys-Gly) (interchain with G-Cter in ubiquitin) cross-link involves residue Lys688. Ser691 is modified (phosphoserine). Lys704 bears the N6-acetyllysine; alternate mark. Residue Lys704 forms a Glycyl lysine isopeptide (Lys-Gly) (interchain with G-Cter in ubiquitin); alternate linkage. Lys710 is covalently cross-linked (Glycyl lysine isopeptide (Lys-Gly) (interchain with G-Cter in ubiquitin)). Lys720 is subject to N6-acetyllysine; alternate. Residue Lys720 forms a Glycyl lysine isopeptide (Lys-Gly) (interchain with G-Cter in ubiquitin); alternate linkage. Tyr729 bears the Phosphotyrosine mark. Residues Ser731 and Ser735 each carry the phosphoserine modification. The segment at 733–752 (VVSGDTSPRHLSNVSSTGSI) is disordered. Polar residues predominate over residues 736 to 751 (GDTSPRHLSNVSSTGS). Thr738 bears the Phosphothreonine mark. Ser739, Ser744, Ser751, and Ser757 each carry phosphoserine. A Phosphothreonine modification is found at Thr762.

In terms of assembly, interacts with MARK1, MARK2, MARK3 and MARK4. Interacts with SQSTM1 when polyubiquitinated. Interacts with PSMC2 through SQSTM1. Interacts with FKBP4. Binds to CSNK1D. Interacts with SGK1. Interacts with EPM2A; the interaction dephosphorylates MAPT at Ser-396. Interacts with PIN1. Interacts with LRRK2. Interacts with LRP1, leading to endocytosis; this interaction is reduced in the presence of LRPAP1/RAP. In terms of processing, polyubiquitinated. Requires functional TRAF6 and may provoke SQSTM1-dependent degradation by the proteasome. Phosphorylation at various serine and threonine residues in S-P or T-P motifs by proline-directed protein kinases (PDPK1, CDK1, CDK5, GSK3, MAPK) (a few sites per protein in interphase, more in mitosis), and at serine residues in K-X-G-S motifs by MAP/microtubule affinity-regulating kinase (MARK1, MARK2, MARK3 or MARK4), causing detachment from microtubules, and their disassembly. Phosphorylation at Ser-597 by BRSK1 and BRSK2 in neurons affects ability to bind microtubules and plays a role in neuron polarization. Phosphorylated by PHK. Dephosphorylation at several serine and threonine residues by the serine/threonine phosphatase PPP5C. Phosphorylation at Ser-214 by SGK1 mediates microtubule depolymerization and neurite formation in hippocampal neurons.

Its subcellular location is the cytoplasm. It localises to the cytosol. The protein resides in the cell membrane. It is found in the cytoskeleton. The protein localises to the cell projection. Its subcellular location is the axon. It localises to the dendrite. Promotes microtubule assembly and stability, and might be involved in the establishment and maintenance of neuronal polarity. The C-terminus binds axonal microtubules while the N-terminus binds neural plasma membrane components, suggesting that tau functions as a linker protein between both. Axonal polarity is predetermined by tau localization (in the neuronal cell) in the domain of the cell body defined by the centrosome. The short isoforms allow plasticity of the cytoskeleton whereas the longer isoforms may preferentially play a role in its stabilization. In Pan troglodytes (Chimpanzee), this protein is Microtubule-associated protein tau (MAPT).